Here is a 603-residue protein sequence, read N- to C-terminus: Elongation factor 4 (603 aa).

The tr-type G domain occupies 7 to 189 (SRLRNFCIIA…AVVDRIPSPK (183 aa)). Residues 19-24 (DHGKST) and 136-139 (NKVD) each bind GTP.

The protein belongs to the TRAFAC class translation factor GTPase superfamily. Classic translation factor GTPase family. LepA subfamily.

It is found in the cell inner membrane. The enzyme catalyses GTP + H2O = GDP + phosphate + H(+). Functionally, required for accurate and efficient protein synthesis under certain stress conditions. May act as a fidelity factor of the translation reaction, by catalyzing a one-codon backward translocation of tRNAs on improperly translocated ribosomes. Back-translocation proceeds from a post-translocation (POST) complex to a pre-translocation (PRE) complex, thus giving elongation factor G a second chance to translocate the tRNAs correctly. Binds to ribosomes in a GTP-dependent manner. The protein is Elongation factor 4 of Prochlorococcus marinus (strain NATL2A).